The following is a 152-amino-acid chain: Sec-independent protein translocase protein TatB (152 aa).

A helical transmembrane segment spans residues 1–21 (MFDVAPSELLLVAVVALVVIG). A compositionally biased stretch (basic and acidic residues) spans 60–71 (EDMEKRWAEENA). The disordered stretch occupies residues 60 to 152 (EDMEKRWAEE…KEADQQEKQS (93 aa)). Low complexity-rich tracts occupy residues 84–98 (TAST…PVSD) and 124–140 (AANH…STPA). A compositionally biased stretch (basic and acidic residues) spans 141–152 (KPKEADQQEKQS).

This sequence belongs to the TatB family. In terms of assembly, the Tat system comprises two distinct complexes: a TatABC complex, containing multiple copies of TatA, TatB and TatC subunits, and a separate TatA complex, containing only TatA subunits. Substrates initially bind to the TatABC complex, which probably triggers association of the separate TatA complex to form the active translocon.

It is found in the cell inner membrane. Part of the twin-arginine translocation (Tat) system that transports large folded proteins containing a characteristic twin-arginine motif in their signal peptide across membranes. Together with TatC, TatB is part of a receptor directly interacting with Tat signal peptides. TatB may form an oligomeric binding site that transiently accommodates folded Tat precursor proteins before their translocation. The chain is Sec-independent protein translocase protein TatB from Zymomonas mobilis subsp. mobilis (strain ATCC 31821 / ZM4 / CP4).